The primary structure comprises 136 residues: Large ribosomal subunit protein uL16 (136 aa).

This sequence belongs to the universal ribosomal protein uL16 family. As to quaternary structure, part of the 50S ribosomal subunit.

In terms of biological role, binds 23S rRNA and is also seen to make contacts with the A and possibly P site tRNAs. This chain is Large ribosomal subunit protein uL16, found in Buchnera aphidicola subsp. Baizongia pistaciae (strain Bp).